The primary structure comprises 146 residues: Acidic phospholipase A2 CM-II (146 aa).

A signal peptide spans 1 to 21; that stretch reads MNPAHLLILAAVCVSPLGAFS. A propeptide spanning residues 22–27 is cleaved from the precursor; that stretch reads NRPMPL. 7 disulfides stabilise this stretch: Cys38–Cys98, Cys53–Cys145, Cys55–Cys71, Cys70–Cys126, Cys77–Cys119, Cys87–Cys112, and Cys105–Cys117. Ca(2+) is bound by residues Tyr54, Gly56, and Gly58. His74 is a catalytic residue. Residue Asp75 coordinates Ca(2+). Asp120 is an active-site residue.

The protein belongs to the phospholipase A2 family. Group I subfamily. D49 sub-subfamily. Ca(2+) serves as cofactor. Expressed by the venom gland.

It is found in the secreted. It catalyses the reaction a 1,2-diacyl-sn-glycero-3-phosphocholine + H2O = a 1-acyl-sn-glycero-3-phosphocholine + a fatty acid + H(+). PLA2 catalyzes the calcium-dependent hydrolysis of the 2-acyl groups in 3-sn-phosphoglycerides. Is able to suppress the acetylcholine (ACh)-evoked current mediated by alpha-7 (CHRNA7)-similar nAChRs in L.stagnalis neurons (IC(50)=37 nM) and to compete with alpha-bungarotoxin for binding to muscle- and alpha-7 neuronal nAChR types, as well as to AChBPs. In inhibition of alpha-bungarotoxin binding, this toxin is similarly active against T.californica nAChR (IC(50)=1.2 uM), human alpha-7 nAChR (IC(50)=3.2 uM), and L.stagnalis AChBP (IC(50)=1.0 uM), whereas it is not active against A.californica AChBP (IC(50)&gt;100 uM). This Naja kaouthia (Monocled cobra) protein is Acidic phospholipase A2 CM-II.